A 488-amino-acid polypeptide reads, in one-letter code: Facilitated trehalose transporter Tret1-2 homolog (488 aa).

The Cytoplasmic portion of the chain corresponds to 1 to 28; that stretch reads MKILMRADTHVSYSVPAEGTKANFTFSQ. Residues 29 to 49 form a helical membrane-spanning segment; it reads VLAALSVSLCSLVVGFVSAYT. Topologically, residues 50–72 are extracellular; sequence SPALVSMTDRTITSFEVTKDAGS. The chain crosses the membrane as a helical span at residues 73-93; the sequence is WVGGIMPLAALAGGITGGPLI. Residues 94 to 105 are Cytoplasmic-facing; it reads EYLGRRNTILAT. The helical transmembrane segment at 106–126 threads the bilayer; it reads AVPFIVSSLLIACAVNVIMIL. Residues 127-129 are Extracellular-facing; the sequence is CGR. The helical transmembrane segment at 130–150 threads the bilayer; it reads FLTGFCVGIASLSLPVYLGET. At 151–160 the chain is on the cytoplasmic side; the sequence is LQPEVRGTLG. The helical transmembrane segment at 161 to 181 threads the bilayer; that stretch reads LLPTALGNIGILVCYVAGSFM. Asn182 carries N-linked (GlcNAc...) asparagine glycosylation. Over 182 to 184 the chain is Extracellular; sequence NWS. Residues 185 to 205 form a helical membrane-spanning segment; sequence ILAFLGAALPVPFLILMIIIP. Residues 206-268 lie on the Cytoplasmic side of the membrane; it reads ETPRWFVNRG…ELFKRINLKP (63 aa). Residues 269–289 form a helical membrane-spanning segment; sequence LSISLGLMFFQQFSGINAVIF. The Extracellular segment spans residues 290–305; the sequence is YTVQIFKDAGSTIDSN. A helical membrane pass occupies residues 306–326; that stretch reads LCTIIVGIVNFFATFMGIILI. Residues 327 to 332 are Cytoplasmic-facing; the sequence is DRLGRK. The helical transmembrane segment at 333-353 threads the bilayer; it reads ILLYVSDIAMILTLSILGGFF. Residues 354–372 are Extracellular-facing; that stretch reads YCKAHGPDVSHLGWLPLSC. A helical transmembrane segment spans residues 373–393; it reads FVIYILGFSLGFGPIPWLMMG. Topologically, residues 394–402 are cytoplasmic; it reads EILPAKIRG. Residues 403-423 form a helical membrane-spanning segment; the sequence is PAASVVTAFNWFCTFVVTKTF. Topologically, residues 424 to 433 are extracellular; it reads QDLTVAMGPH. The chain crosses the membrane as a helical span at residues 434–454; the sequence is GAFWLFGVVCIVGLFFVIIYV. Over 455–488 the chain is Cytoplasmic; it reads PETRGKSLEEIERKMMGRVPISAVVNIKPFSFNM.

The protein belongs to the major facilitator superfamily. Sugar transporter (TC 2.A.1.1) family. Trehalose transporter subfamily.

The protein localises to the cell membrane. In terms of biological role, fails to transport trehalose. The polypeptide is Facilitated trehalose transporter Tret1-2 homolog (Drosophila sechellia (Fruit fly)).